A 258-amino-acid chain; its full sequence is Thiazole synthase (258 aa).

The active-site Schiff-base intermediate with DXP is the K96. Residues G157, 183–184, and 205–206 contribute to the 1-deoxy-D-xylulose 5-phosphate site; these read AG and NT.

This sequence belongs to the ThiG family. In terms of assembly, homotetramer. Forms heterodimers with either ThiH or ThiS.

The protein resides in the cytoplasm. The catalysed reaction is [ThiS sulfur-carrier protein]-C-terminal-Gly-aminoethanethioate + 2-iminoacetate + 1-deoxy-D-xylulose 5-phosphate = [ThiS sulfur-carrier protein]-C-terminal Gly-Gly + 2-[(2R,5Z)-2-carboxy-4-methylthiazol-5(2H)-ylidene]ethyl phosphate + 2 H2O + H(+). It functions in the pathway cofactor biosynthesis; thiamine diphosphate biosynthesis. Functionally, catalyzes the rearrangement of 1-deoxy-D-xylulose 5-phosphate (DXP) to produce the thiazole phosphate moiety of thiamine. Sulfur is provided by the thiocarboxylate moiety of the carrier protein ThiS. In vitro, sulfur can be provided by H(2)S. In Alkaliphilus metalliredigens (strain QYMF), this protein is Thiazole synthase.